The chain runs to 101 residues: Putative fatty acid-binding protein 5-like protein 3 (101 aa).

This sequence belongs to the calycin superfamily. Fatty-acid binding protein (FABP) family.

Functionally, high specificity for fatty acids. This chain is Putative fatty acid-binding protein 5-like protein 3 (FABP5P3), found in Homo sapiens (Human).